The sequence spans 167 residues: Translationally-controlled tumor protein homolog (167 aa).

Residues 1–167 form the TCTP domain; the sequence is MLIYQDVLTG…WKDGLKEIKI (167 aa).

This sequence belongs to the TCTP family.

It is found in the cytoplasm. The protein localises to the cytoskeleton. Functionally, involved in protein synthesis. Involved in microtubule stabilization. This Cryptococcus neoformans var. neoformans serotype D (strain B-3501A) (Filobasidiella neoformans) protein is Translationally-controlled tumor protein homolog.